The primary structure comprises 266 residues: Putative pyruvate, phosphate dikinase regulatory protein (266 aa).

149–156 (GVSRTSKT) contacts ADP.

The protein belongs to the pyruvate, phosphate/water dikinase regulatory protein family. PDRP subfamily.

The catalysed reaction is N(tele)-phospho-L-histidyl/L-threonyl-[pyruvate, phosphate dikinase] + ADP = N(tele)-phospho-L-histidyl/O-phospho-L-threonyl-[pyruvate, phosphate dikinase] + AMP + H(+). It carries out the reaction N(tele)-phospho-L-histidyl/O-phospho-L-threonyl-[pyruvate, phosphate dikinase] + phosphate + H(+) = N(tele)-phospho-L-histidyl/L-threonyl-[pyruvate, phosphate dikinase] + diphosphate. Its function is as follows. Bifunctional serine/threonine kinase and phosphorylase involved in the regulation of the pyruvate, phosphate dikinase (PPDK) by catalyzing its phosphorylation/dephosphorylation. This Geobacillus kaustophilus (strain HTA426) protein is Putative pyruvate, phosphate dikinase regulatory protein.